The sequence spans 622 residues: DNA mismatch repair protein MutL (622 aa).

Belongs to the DNA mismatch repair MutL/HexB family.

Functionally, this protein is involved in the repair of mismatches in DNA. It is required for dam-dependent methyl-directed DNA mismatch repair. May act as a 'molecular matchmaker', a protein that promotes the formation of a stable complex between two or more DNA-binding proteins in an ATP-dependent manner without itself being part of a final effector complex. This Phenylobacterium zucineum (strain HLK1) protein is DNA mismatch repair protein MutL.